The following is a 410-amino-acid chain: Elongation factor Tu (410 aa).

One can recognise a tr-type G domain in the interval 10–214 (KPHVNIGTIG…EVDAYIPTPE (205 aa)). A G1 region spans residues 19–26 (GHVDHGKT). 19–26 (GHVDHGKT) is a GTP binding site. Position 26 (threonine 26) interacts with Mg(2+). Residues 60–64 (GITIN) form a G2 region. The tract at residues 81–84 (DCPG) is G3. GTP-binding positions include 81 to 85 (DCPGH) and 136 to 139 (NKAD). Residues 136–139 (NKAD) are G4. A G5 region spans residues 174-176 (SAL).

The protein belongs to the TRAFAC class translation factor GTPase superfamily. Classic translation factor GTPase family. EF-Tu/EF-1A subfamily. As to quaternary structure, monomer.

Its subcellular location is the cytoplasm. It carries out the reaction GTP + H2O = GDP + phosphate + H(+). Functionally, GTP hydrolase that promotes the GTP-dependent binding of aminoacyl-tRNA to the A-site of ribosomes during protein biosynthesis. The protein is Elongation factor Tu of Arthrospira platensis (Spirulina platensis).